A 1375-amino-acid polypeptide reads, in one-letter code: BNI1-related protein 1 (1375 aa).

In terms of domain architecture, GBD/FH3 spans 94–490; the sequence is CMPQDASLVE…YLIDSFQVST (397 aa). The stretch at 520–601 forms a coiled coil; sequence QSDEIARRAV…ITTHQRLYDQ (82 aa). A Phosphoserine modification is found at Ser-621. The region spanning 659–851 is the FH1 domain; the sequence is SSYLTDANNE…LVTPPAPPLP (193 aa). A disordered region spans residues 661–684; the sequence is YLTDANNENESQNESEDKSKDSLF. Residue Ser-751 is modified to Phosphoserine. Disordered regions lie at residues 764–785, 817–839, and 1285–1309; these read KLPQLPPPPPPPPPPPLPQSLL, AVPPPPPPPPLPESLSMNKGPSN, and KSLLDMRTSSNKKSNGSDENDGEKV. Pro residues-rich tracts occupy residues 767–781 and 818–828; these read QLPPPPPPPPPPPLP and VPPPPPPPPLP. In terms of domain architecture, FH2 spans 868 to 1290; sequence DLKPPPTEKR…YEQRKSLLDM (423 aa). Positions 1302-1336 constitute a DAD domain; the sequence is DENDGEKVNRDAVDLLISKLREVKKDPEPLRRRKS.

It belongs to the formin homology family. BNI1 subfamily. As to quaternary structure, interacts with profilin at the FH1 domain.

Functionally, may organize microtubules by mediating spindle positioning and movement in the budding process. Potential target of the RHO family members. The chain is BNI1-related protein 1 (BNR1) from Saccharomyces cerevisiae (strain ATCC 204508 / S288c) (Baker's yeast).